The primary structure comprises 789 residues: Fibrinogen alpha chain (789 aa).

Residues 1–19 (MLSLRVTCLILSVASTVWT) form the signal peptide. S46 carries the phosphoserine modification. The stretch at 69–554 (CRMKGLIDEA…GRARARPTRD (486 aa)) forms a coiled coil. Composition is skewed to basic and acidic residues over residues 263 to 287 (ERPGKDGGSRGDSPGDSRGDSRGDF) and 384 to 396 (KGDKELLIGKEKV). Residues 263–420 (ERPGKDGGSR…TITKTVTGPD (158 aa)) form a disordered region. The segment covering 397–416 (TSSGTSTTHRSCSKTITKTV) has biased composition (polar residues). A disulfide bridge connects residues C408 and C438. The residue at position 447 (S447) is a Phosphoserine. Position 504 is a 4-hydroxyproline; by P4HA1 (P504). Residues 526 to 541 (ADEAGSEAHREGETRN) show a composition bias toward basic and acidic residues. The interval 526–555 (ADEAGSEAHREGETRNTKRGRARARPTRDC) is disordered. The Fibrinogen C-terminal domain maps to 546 to 787 (RARARPTRDC…AVRMKIRPLV (242 aa)). N609 is a glycosylation site (N-linked (GlcNAc...) asparagine). 4 residues coordinate Ca(2+): D714, D716, W718, and E720. Cysteines 722 and 735 form a disulfide.

As to quaternary structure, heterohexamer; disulfide linked. Contains 2 sets of 3 non-identical chains (alpha, beta and gamma). The 2 heterotrimers are in head to head conformation with the N-termini in a small central domain. Post-translationally, conversion of fibrinogen to fibrin is triggered by thrombin, which cleaves fibrinopeptides A and B from alpha and beta chains, and thus exposes the N-terminal polymerization sites responsible for the formation of the soft clot. The soft clot is converted into the hard clot by factor XIIIA which catalyzes the epsilon-(gamma-glutamyl)lysine cross-linking between gamma chains (stronger) and between alpha chains (weaker) of different monomers. In terms of processing, forms F13A-mediated cross-links between a glutamine and the epsilon-amino group of a lysine residue, forming fibronectin-fibrinogen heteropolymers. Phosphorylated by FAM20C in the extracellular medium. In terms of tissue distribution, expressed in liver.

It is found in the secreted. Functionally, cleaved by the protease thrombin to yield monomers which, together with fibrinogen beta (FGB) and fibrinogen gamma (FGG), polymerize to form an insoluble fibrin matrix. Fibrin has a major function in hemostasis as one of the primary components of blood clots. In addition, functions during the early stages of wound repair to stabilize the lesion and guide cell migration during re-epithelialization. Was originally thought to be essential for platelet aggregation, based on in vitro studies using anticoagulated blood. However, subsequent studies have shown that it is not absolutely required for thrombus formation in vivo. Enhances expression of SELP in activated platelets via an ITGB3-dependent pathway. Maternal fibrinogen is essential for successful pregnancy. Fibrin deposition is also associated with infection, where it protects against IFNG-mediated hemorrhage. May also facilitate the immune response via both innate and T-cell mediated pathways. This Mus musculus (Mouse) protein is Fibrinogen alpha chain.